A 200-amino-acid polypeptide reads, in one-letter code: MAFTEHSPLTPHRRDLCSRSIWLARKIRSDLTALTESYVKHQGLNKNINLDSADGMPVASTDQWSELTEAERLQENLQAYRTFHVLLARLLEDQQVHFTPTEGDFHQAIHTLLLQVAAFAYQIEELMILLEYKIPRNEADGMPINVGDGGLFEKKLWGLKVLQELSQWTVRSIHDLRFISSHQTGIPARGSHYIANNKKM.

This sequence belongs to the CNTF family. Homodimer. Nervous system.

It is found in the cytoplasm. CNTF is a survival factor for various neuronal cell types. Seems to prevent the degeneration of motor axons after axotomy. In Homo sapiens (Human), this protein is Ciliary neurotrophic factor (CNTF).